A 443-amino-acid chain; its full sequence is MVKYEDKICLFDAKGNQVAEDVPLEAISPLNNPTIMGMVKNIKRTVAVNLAGIEESLAKGKIGGKGCQVPGTNIELDVIGDAEAIADKVKSILQVSAGDDTEVKLINGGKQMAEQVPSKRLDVAAEYSVSMLSTGMALKEALITNFNIDMFDGSTVHSAIMGQYPQDMDYAGGNIASLLGAPSKLEGLGYALRNIPVNHAVATTKKSLMNAIAFSSILEQTAMFEMGDAVGSFERQHLLGLAYQGLNADNLVVELVKANATGTVGSVVNSIVEKAIADGVIVVDKTLGSGFNMYKPADVNKWNAYAAAGLVAAVMVSCGAARAAQNVASTILYYNDILEYETGLPGVDYGRSMGTAVGFSFFSHSIYGGGGPGIFNGNHVVTRHSKGFAIPPVCAAMCMDAGTQMFSPEKTSALVGTVYSAFDEFREPLKYVIEGALEVQNKL.

Y367 lines the coenzyme M pocket. G369 contributes to the coenzyme B binding site.

It belongs to the methyl-coenzyme M reductase beta subunit family. As to quaternary structure, MCR is a hexamer of two alpha, two beta, and two gamma chains, forming a dimer of heterotrimers. Requires coenzyme F430 as cofactor.

It is found in the cytoplasm. The enzyme catalyses coenzyme B + methyl-coenzyme M = methane + coenzyme M-coenzyme B heterodisulfide. It functions in the pathway one-carbon metabolism; methyl-coenzyme M reduction; methane from methyl-coenzyme M: step 1/1. Component of the methyl-coenzyme M reductase (MCR) I that catalyzes the reductive cleavage of methyl-coenzyme M (CoM-S-CH3 or 2-(methylthio)ethanesulfonate) using coenzyme B (CoB or 7-mercaptoheptanoylthreonine phosphate) as reductant which results in the production of methane and the mixed heterodisulfide of CoB and CoM (CoM-S-S-CoB). This is the final step in methanogenesis. In Methanococcus voltae, this protein is Methyl-coenzyme M reductase subunit beta (mcrB).